The primary structure comprises 89 residues: uncharacterized protein (89 aa).

This is an uncharacterized protein from Bacillus subtilis (strain 168).